Consider the following 399-residue polypeptide: Argininosuccinate synthase (399 aa).

9–17 (AYSGGLDTS) serves as a coordination point for ATP. Tyrosine 85 serves as a coordination point for L-citrulline. Glycine 115 provides a ligand contact to ATP. L-aspartate is bound by residues threonine 117, asparagine 121, and aspartate 122. Asparagine 121 serves as a coordination point for L-citrulline. L-citrulline is bound by residues arginine 125, serine 173, glutamate 258, and tyrosine 270.

This sequence belongs to the argininosuccinate synthase family. Type 1 subfamily. Homotetramer.

Its subcellular location is the cytoplasm. It carries out the reaction L-citrulline + L-aspartate + ATP = 2-(N(omega)-L-arginino)succinate + AMP + diphosphate + H(+). The protein operates within amino-acid biosynthesis; L-arginine biosynthesis; L-arginine from L-ornithine and carbamoyl phosphate: step 2/3. This chain is Argininosuccinate synthase, found in Streptococcus thermophilus (strain CNRZ 1066).